Consider the following 778-residue polypeptide: Probable glutamine--tRNA ligase (778 aa).

Over residues 188-205 (LKPQTKANDKPKAAKPKA) the composition is skewed to basic and acidic residues. The tract at residues 188 to 219 (LKPQTKANDKPKAAKPKAEVTPAAQTAEAASD) is disordered. Residues 273-283 (PEPNGILHIGH) carry the 'HIGH' region motif. ATP contacts are provided by residues 274 to 276 (EPN) and 280 to 286 (HIGHAKA). L-glutamine is bound by residues aspartate 306 and tyrosine 441. ATP is bound by residues threonine 460, 489–490 (RL), and 497–499 (VSK). The short motif at 496–500 (LVSKR) is the 'KMSKS' region element.

Belongs to the class-I aminoacyl-tRNA synthetase family.

It carries out the reaction tRNA(Gln) + L-glutamine + ATP = L-glutaminyl-tRNA(Gln) + AMP + diphosphate. The protein is Probable glutamine--tRNA ligase of Drosophila melanogaster (Fruit fly).